The primary structure comprises 161 residues: Transcriptional repressor NrdR (161 aa).

A zinc finger lies at 3–34 (CPSCQHTDSRVLESRAADSGKSVRRRRECLNC). An ATP-cone domain is found at 49–139 (ITVVKRSGTR…VYGKFSGISD (91 aa)).

This sequence belongs to the NrdR family. It depends on Zn(2+) as a cofactor.

Its function is as follows. Negatively regulates transcription of bacterial ribonucleotide reductase nrd genes and operons by binding to NrdR-boxes. The protein is Transcriptional repressor NrdR of Synechococcus sp. (strain RCC307).